Here is a 306-residue protein sequence, read N- to C-terminus: Agmatinase (306 aa).

Mn(2+)-binding residues include H126, D149, H151, D153, D230, and D232.

Belongs to the arginase family. Agmatinase subfamily. The cofactor is Mn(2+).

It carries out the reaction agmatine + H2O = urea + putrescine. It participates in amine and polyamine biosynthesis; putrescine biosynthesis via agmatine pathway; putrescine from agmatine: step 1/1. In terms of biological role, catalyzes the formation of putrescine from agmatine. In Escherichia coli (strain SE11), this protein is Agmatinase.